Here is a 156-residue protein sequence, read N- to C-terminus: Ribosomal RNA large subunit methyltransferase H (156 aa).

S-adenosyl-L-methionine contacts are provided by residues leucine 73, glycine 104, and 123–128; that span reads LSALTL.

This sequence belongs to the RNA methyltransferase RlmH family. Homodimer.

The protein localises to the cytoplasm. It catalyses the reaction pseudouridine(1915) in 23S rRNA + S-adenosyl-L-methionine = N(3)-methylpseudouridine(1915) in 23S rRNA + S-adenosyl-L-homocysteine + H(+). Functionally, specifically methylates the pseudouridine at position 1915 (m3Psi1915) in 23S rRNA. The polypeptide is Ribosomal RNA large subunit methyltransferase H (Shewanella frigidimarina (strain NCIMB 400)).